We begin with the raw amino-acid sequence, 257 residues long: Isoprenyl transferase 1 (257 aa).

Aspartate 37 is a catalytic residue. Aspartate 37 contributes to the Mg(2+) binding site. Substrate-binding positions include 38 to 41 (GNRR), tryptophan 42, histidine 54, and 82 to 84 (STD). Asparagine 85 serves as the catalytic Proton acceptor. Substrate is bound by residues phenylalanine 86, arginine 88, arginine 206, and 212–214 (RLS). Glutamate 225 contacts Mg(2+).

Belongs to the UPP synthase family. In terms of assembly, homodimer. Mg(2+) is required as a cofactor.

Its function is as follows. Catalyzes the condensation of isopentenyl diphosphate (IPP) with allylic pyrophosphates generating different type of terpenoids. The polypeptide is Isoprenyl transferase 1 (Streptomyces avermitilis (strain ATCC 31267 / DSM 46492 / JCM 5070 / NBRC 14893 / NCIMB 12804 / NRRL 8165 / MA-4680)).